We begin with the raw amino-acid sequence, 378 residues long: tRNA-specific 2-thiouridylase MnmA (378 aa).

Residues 7-14 and Met-33 each bind ATP; that span reads GLSGGVDS. An interaction with target base in tRNA region spans residues 102 to 104; sequence NPD. The Nucleophile role is filled by Cys-107. A disulfide bridge connects residues Cys-107 and Cys-209. Residue Gly-132 coordinates ATP. Positions 159-161 are interaction with tRNA; that stretch reads KDQ. Cys-209 (cysteine persulfide intermediate) is an active-site residue. An interaction with tRNA region spans residues 316 to 317; the sequence is RY.

Belongs to the MnmA/TRMU family.

It localises to the cytoplasm. It carries out the reaction S-sulfanyl-L-cysteinyl-[protein] + uridine(34) in tRNA + AH2 + ATP = 2-thiouridine(34) in tRNA + L-cysteinyl-[protein] + A + AMP + diphosphate + H(+). Functionally, catalyzes the 2-thiolation of uridine at the wobble position (U34) of tRNA, leading to the formation of s(2)U34. The sequence is that of tRNA-specific 2-thiouridylase MnmA from Onion yellows phytoplasma (strain OY-M).